Consider the following 446-residue polypeptide: Transcription factor SOX-8 (446 aa).

Disordered regions lie at residues 1 to 58 (MLDM…DPAE), 155 to 259 (AERL…RQNI), and 318 to 378 (HKSA…PFAG). Positions 40-53 (EGLGRAGVAVGGAR) are enriched in gly residues. The tract at residues 58–100 (EAADERFPACIRDAVSQVLKGYDWSLVPMPVRGGGGGALKAKP) is dimerization (DIM). Positions 102 to 170 (VKRPMNAFMV…QHKKDHPDYK (69 aa)) form a DNA-binding region, HMG box. Composition is skewed to basic and acidic residues over residues 155-171 (AERLRVQHKKDHPDYKY), 210-219 (DGHHHGDHTG), and 242-253 (PELKLEGRRPVD). Positions 224–298 (PPTPPTTPKT…LPLGGPAPPE (75 aa)) are transactivation domain (TAM). The transactivation domain (TAC) stretch occupies residues 335–446 (RPHIKTEQPS…QPVYTTLTRP (112 aa)). The span at 362-378 (SGQSSATPAAPAGPFAG) shows a compositional bias: low complexity. The short motif at 400-408 (PGLYQYPCF) is the 9aaTAD element. Positions 425–446 (LPPAHSPTSHWDQPVYTTLTRP) are disordered. Residues 430-446 (SPTSHWDQPVYTTLTRP) show a composition bias toward polar residues.

The protein localises to the nucleus. Functionally, transcription factor that may play a role in central nervous system, limb and facial development. May be involved in male sex determination. Binds the consensus motif 5'-[AT][AT]CAA[AT]G-3'. The polypeptide is Transcription factor SOX-8 (Homo sapiens (Human)).